The following is a 158-amino-acid chain: Transcription elongation factor GreA (158 aa).

It belongs to the GreA/GreB family.

In terms of biological role, necessary for efficient RNA polymerase transcription elongation past template-encoded arresting sites. The arresting sites in DNA have the property of trapping a certain fraction of elongating RNA polymerases that pass through, resulting in locked ternary complexes. Cleavage of the nascent transcript by cleavage factors such as GreA or GreB allows the resumption of elongation from the new 3'terminus. GreA releases sequences of 2 to 3 nucleotides. In Methylobacterium sp. (strain 4-46), this protein is Transcription elongation factor GreA.